A 149-amino-acid polypeptide reads, in one-letter code: Large ribosomal subunit protein bL9 (149 aa).

Belongs to the bacterial ribosomal protein bL9 family.

Functionally, binds to the 23S rRNA. The polypeptide is Large ribosomal subunit protein bL9 (Anaeromyxobacter dehalogenans (strain 2CP-C)).